The following is a 185-amino-acid chain: Ribosome-recycling factor (185 aa).

It belongs to the RRF family.

The protein localises to the cytoplasm. Its function is as follows. Responsible for the release of ribosomes from messenger RNA at the termination of protein biosynthesis. May increase the efficiency of translation by recycling ribosomes from one round of translation to another. The polypeptide is Ribosome-recycling factor (Chloroflexus aurantiacus (strain ATCC 29364 / DSM 637 / Y-400-fl)).